A 568-amino-acid chain; its full sequence is Involucrin (568 aa).

Disordered regions lie at residues Cys23–Leu499 and Arg517–Gln568. Over residues Pro25–Pro36 the composition is skewed to low complexity. Positions Thr49–Gln77 are enriched in basic and acidic residues. Low complexity predominate over residues Gln78–Val88. A compositionally biased stretch (basic and acidic residues) spans Lys89 to Pro106. 3 stretches are compositionally biased toward low complexity: residues Gln107–Arg121, His133–Leu154, and Pro172–Lys181. Over residues Lys193–His213 the composition is skewed to basic and acidic residues. Residues Gln217–His232 are compositionally biased toward low complexity. Basic and acidic residues-rich tracts occupy residues Glu266 to Thr333 and Lys345 to Lys456. The span at Gln457–Tyr467 shows a compositional bias: low complexity. Position 472 is a phosphoserine (Ser472). 3 stretches are compositionally biased toward basic and acidic residues: residues Lys478–Leu499, Arg517–Ile532, and Val551–Gln568.

The protein belongs to the involucrin family. As to quaternary structure, directly or indirectly cross-linked to cornifelin (CNFN). In terms of processing, substrate of transglutaminase. Specific glutamines or lysines are cross-linked to keratins, desmoplakin and to inter involucrin molecules. As to expression, keratinocytes of epidermis and other stratified squamous epithelia.

It localises to the cytoplasm. Part of the insoluble cornified cell envelope (CE) of stratified squamous epithelia. The polypeptide is Involucrin (Ivl) (Rattus norvegicus (Rat)).